The primary structure comprises 271 residues: Phosphonates import ATP-binding protein PhnC 2 (271 aa).

The ABC transporter domain maps to Leu-2–Ala-245. Gly-34–Ser-41 provides a ligand contact to ATP.

Belongs to the ABC transporter superfamily. Phosphonates importer (TC 3.A.1.9.1) family. The complex is composed of two ATP-binding proteins (PhnC), two transmembrane proteins (PhnE) and a solute-binding protein (PhnD).

The protein localises to the cell inner membrane. The enzyme catalyses phosphonate(out) + ATP + H2O = phosphonate(in) + ADP + phosphate + H(+). In terms of biological role, part of the ABC transporter complex PhnCDE involved in phosphonates import. Responsible for energy coupling to the transport system. The polypeptide is Phosphonates import ATP-binding protein PhnC 2 (Rhodopseudomonas palustris (strain BisB18)).